The sequence spans 418 residues: Staphyloferrin B transporter (418 aa).

Helical transmembrane passes span 19 to 39, 49 to 69, 88 to 108, 163 to 183, 222 to 242, 257 to 277, 287 to 307, 317 to 337, 353 to 373, and 377 to 397; these read FIAI…MASL, LWSG…SPIW, GLAV…FVLV, ILGF…VCIF, FIIV…ALSP, VIGF…PLWG, SVYI…GLAT, ILQG…VVNA, MLVV…SYTT, and TFIV…CSTI.

The protein belongs to the major facilitator superfamily.

It is found in the cell membrane. Involved in staphyloferrin B secretion. The chain is Staphyloferrin B transporter from Staphylococcus aureus (strain NCTC 8325 / PS 47).